A 284-amino-acid chain; its full sequence is Probable tRNA-splicing endonuclease subunit sen34 (284 aa).

Catalysis depends on residues Tyr-206, His-214, and Lys-245.

Belongs to the tRNA-intron endonuclease family. As to quaternary structure, heterotetramer composed of sen2, sen15, sen34 and sen54. Interacts directly with sen15.

It carries out the reaction pretRNA = a 3'-half-tRNA molecule with a 5'-OH end + a 5'-half-tRNA molecule with a 2',3'-cyclic phosphate end + an intron with a 2',3'-cyclic phosphate and a 5'-hydroxyl terminus.. In terms of biological role, constitutes one of the two catalytic subunit of the tRNA-splicing endonuclease complex, a complex responsible for identification and cleavage of the splice sites in pre-tRNA. It cleaves pre-tRNA at the 5'- and 3'-splice sites to release the intron. The products are an intron and two tRNA half-molecules bearing 2',3'-cyclic phosphate and 5'-OH termini. There are no conserved sequences at the splice sites, but the intron is invariably located at the same site in the gene, placing the splice sites an invariant distance from the constant structural features of the tRNA body. It probably carries the active site for 3'-splice site cleavage. This Schizosaccharomyces pombe (strain 972 / ATCC 24843) (Fission yeast) protein is Probable tRNA-splicing endonuclease subunit sen34 (sen34).